Reading from the N-terminus, the 137-residue chain is Hydrogenase maturation factor HypA (137 aa).

H2 lines the Ni(2+) pocket. Positions 73, 75, 105, and 108 each coordinate Zn(2+).

This sequence belongs to the HypA/HybF family.

In terms of biological role, involved in the maturation of [NiFe] hydrogenases. Required for nickel insertion into the metal center of the hydrogenase. This chain is Hydrogenase maturation factor HypA, found in Methanosarcina mazei (strain ATCC BAA-159 / DSM 3647 / Goe1 / Go1 / JCM 11833 / OCM 88) (Methanosarcina frisia).